The chain runs to 313 residues: MSQKPVLVILGPTASGKTELAFRIARKTGGEIISADSRQIYRSMDIGTAKPPKWMLNEVKHHFIDEKEIGEPFSAGDFAEQAAERIRELRQRGITPIVAGGSTLYLEGLLKGFAELPQSNPEIRARLKHELELHGAEALYRRLEAFDPEQAKTLDPTKTQRLIRSLEIIEISGTTVTALQRKTSGPPPGIEFTVIALDLPREVLYERINRRTSEMMHAGLEAETRHLFDKFRDEWRSKKLNALATVGYRELFEHFEGLYNLETAEALIAQHTRNYAKRQLTFFRNRLDVEWVKGPLDEAGIEALVESLCEKIA.

11–18 (GPTASGKT) contributes to the ATP binding site. 13–18 (TASGKT) serves as a coordination point for substrate. Interaction with substrate tRNA regions lie at residues 36–39 (DSRQ) and 160–164 (QRLIR).

This sequence belongs to the IPP transferase family. As to quaternary structure, monomer. Mg(2+) serves as cofactor.

It carries out the reaction adenosine(37) in tRNA + dimethylallyl diphosphate = N(6)-dimethylallyladenosine(37) in tRNA + diphosphate. Functionally, catalyzes the transfer of a dimethylallyl group onto the adenine at position 37 in tRNAs that read codons beginning with uridine, leading to the formation of N6-(dimethylallyl)adenosine (i(6)A). This Chlorobaculum parvum (strain DSM 263 / NCIMB 8327) (Chlorobium vibrioforme subsp. thiosulfatophilum) protein is tRNA dimethylallyltransferase.